Consider the following 341-residue polypeptide: MVTNPGGGSTDAGGGPVRHIPVLLNEVLAALSPAPGKLILDGTFGAGGYSAAILAAGAEVIALDRDPSAIAAGQAMVAAHAGRLRLIHAQFSNLGDHAPQGGLDGVVLDIGVSSMQIDEPERGFSFQKSGPLDMRMSATGVSAADVVNRAKVADLIRIFHFLGEENQAPRIAHAIEKRREEKPFETTRDLAGLIELVTPRKMKDKIHPATRVFQALRIFVNDELGELAQALFAAERTLKPGGRLVVVTFHSLEDRIVKKFFSDRAGRATGSRHLPAAHERAATFTAIGKPMVSASEAEAEANPRARSAKLRAGLRTDAAAEAADMSLFGFPNLASLGKLGG.

S-adenosyl-L-methionine contacts are provided by residues 47–49 (GGY), Asp-64, Phe-91, Asp-109, and Gln-116.

It belongs to the methyltransferase superfamily. RsmH family.

It localises to the cytoplasm. The catalysed reaction is cytidine(1402) in 16S rRNA + S-adenosyl-L-methionine = N(4)-methylcytidine(1402) in 16S rRNA + S-adenosyl-L-homocysteine + H(+). Specifically methylates the N4 position of cytidine in position 1402 (C1402) of 16S rRNA. The chain is Ribosomal RNA small subunit methyltransferase H from Rhizobium etli (strain ATCC 51251 / DSM 11541 / JCM 21823 / NBRC 15573 / CFN 42).